A 475-amino-acid polypeptide reads, in one-letter code: Protein transport protein Sec61 subunit alpha (475 aa).

10 helical membrane passes run 33–53 (LWTAITLFIFLVCCQIPLFGI), 76–96 (LMELGITPIVTSGLIMQLLAG), 118–138 (LFGMIITIGQAVVYVMTGMYG), 145–165 (AGICLLIIIQLFIASLIVLLL), 173–193 (YGLGSGISLFIATNICETIVW), 241–261 (NLMNLSATILVFGIVIYFQGF), 289–309 (IPIILQSALVSGLYVISQMLA), 354–374 (FLDPIHGLLYITFMLGSCAFF), 420–440 (AAFGGLCIGALSVLADFIGAI), and 441–461 (GSGTGILLAVTIIYQYFEIFV).

This sequence belongs to the SecY/SEC61-alpha family. In terms of assembly, the SEC61 channel-forming translocon complex consists of channel-forming core components SEC61A1, SEC61B and SEC61G and different auxiliary components such as SEC62 and SEC63. The SEC61 channel associates with the multi-pass translocon (MPT) complex. Expressed predominantly in epidermal cells of the embryo.

It is found in the endoplasmic reticulum membrane. Its function is as follows. Component of SEC61 channel-forming translocon complex that mediates transport of signal peptide-containing precursor polypeptides across the endoplasmic reticulum (ER). Forms a ribosome receptor and a gated pore in the ER membrane, both functions required for cotranslational translocation of nascent polypeptides. May cooperate with auxiliary protein SEC62, SEC63 and HSPA5/BiP to enable post-translational transport of small presecretory proteins. The SEC61 channel is also involved in ER membrane insertion of transmembrane proteins: it mediates membrane insertion of the first few transmembrane segments of proteins, while insertion of subsequent transmembrane regions of multi-pass membrane proteins is mediated by the multi-pass translocon (MPT) complex. The chain is Protein transport protein Sec61 subunit alpha from Halocynthia roretzi (Sea squirt).